The following is a 718-amino-acid chain: Ribosomal RNA large subunit methyltransferase K/L (718 aa).

Residues 43–154 (TQYRILLWSR…QDELVVSLDL (112 aa)) form the THUMP domain.

It belongs to the methyltransferase superfamily. RlmKL family.

It is found in the cytoplasm. It carries out the reaction guanosine(2445) in 23S rRNA + S-adenosyl-L-methionine = N(2)-methylguanosine(2445) in 23S rRNA + S-adenosyl-L-homocysteine + H(+). The enzyme catalyses guanosine(2069) in 23S rRNA + S-adenosyl-L-methionine = N(2)-methylguanosine(2069) in 23S rRNA + S-adenosyl-L-homocysteine + H(+). Functionally, specifically methylates the guanine in position 2445 (m2G2445) and the guanine in position 2069 (m7G2069) of 23S rRNA. This Histophilus somni (strain 129Pt) (Haemophilus somnus) protein is Ribosomal RNA large subunit methyltransferase K/L.